Here is a 126-residue protein sequence, read N- to C-terminus: Small ribosomal subunit protein uS13 (126 aa).

The interval 101–126 (QKTKNNCRTRKGKKKTVANKKKKINK) is disordered.

The protein belongs to the universal ribosomal protein uS13 family. As to quaternary structure, part of the 30S ribosomal subunit. Forms a loose heterodimer with protein S19. Forms two bridges to the 50S subunit in the 70S ribosome.

Located at the top of the head of the 30S subunit, it contacts several helices of the 16S rRNA. In the 70S ribosome it contacts the 23S rRNA (bridge B1a) and protein L5 of the 50S subunit (bridge B1b), connecting the 2 subunits; these bridges are implicated in subunit movement. Contacts the tRNAs in the A and P-sites. The protein is Small ribosomal subunit protein uS13 of Karelsulcia muelleri (strain GWSS) (Sulcia muelleri).